A 202-amino-acid chain; its full sequence is Small ribosomal subunit protein uS4c (202 aa).

The tract at residues arginine 13 to threonine 37 is disordered. The segment covering glycine 20–threonine 37 has biased composition (polar residues). In terms of domain architecture, S4 RNA-binding spans methionine 90 to isoleucine 153.

It belongs to the universal ribosomal protein uS4 family. In terms of assembly, part of the 30S ribosomal subunit. Contacts protein S5. The interaction surface between S4 and S5 is involved in control of translational fidelity.

It is found in the plastid. Its subcellular location is the chloroplast. Functionally, one of the primary rRNA binding proteins, it binds directly to 16S rRNA where it nucleates assembly of the body of the 30S subunit. Its function is as follows. With S5 and S12 plays an important role in translational accuracy. The protein is Small ribosomal subunit protein uS4c (rps4) of Takakia lepidozioides (Moss).